Here is a 135-residue protein sequence, read N- to C-terminus: UPF0355 protein SH2586 (135 aa).

A disordered region spans residues 105 to 135 (NSSHDEVEENNSAYEEIDITHYANESKGPKS).

The protein belongs to the UPF0355 family.

This Staphylococcus haemolyticus (strain JCSC1435) protein is UPF0355 protein SH2586.